The chain runs to 290 residues: uncharacterized protein (290 aa).

Disordered stretches follow at residues 1 to 98 (MLGQ…SRRV) and 209 to 236 (LSGQ…AATT). The segment covering 63–76 (KPDRVRPGQRDRIG) has biased composition (basic and acidic residues). Residues 87–97 (AGQARAASSRR) show a composition bias toward low complexity. Residues 261 to 281 (CILTALLAVSFHSIGVVIMTS) form a helical membrane-spanning segment.

It localises to the membrane. This is an uncharacterized protein from Homo sapiens (Human).